The primary structure comprises 206 residues: MARYLGPKLKLSRREGTDLFLKSGVRAIDSKCKIDTAPGQHGARKPRLSDYGSQLREKQKVRRIYGILERQFRNYYKEANRLKGNTGENLLVLLEGRLDNVVYRMGFAATRAEARQLVSHKAIVVNGRVVNIPSFQVSVDDVVAVREKSKKQARIKASLELAEQREKPTWLEVDAAKMEGVFKRVPERSDLSADINEHLIVELYSK.

Positions 96–156 (GRLDNVVYRM…EKSKKQARIK (61 aa)) constitute an S4 RNA-binding domain.

This sequence belongs to the universal ribosomal protein uS4 family. As to quaternary structure, part of the 30S ribosomal subunit. Contacts protein S5. The interaction surface between S4 and S5 is involved in control of translational fidelity.

One of the primary rRNA binding proteins, it binds directly to 16S rRNA where it nucleates assembly of the body of the 30S subunit. Functionally, with S5 and S12 plays an important role in translational accuracy. The sequence is that of Small ribosomal subunit protein uS4 from Mannheimia succiniciproducens (strain KCTC 0769BP / MBEL55E).